A 472-amino-acid chain; its full sequence is Aspartyl/glutamyl-tRNA(Asn/Gln) amidotransferase subunit B (472 aa).

Belongs to the GatB/GatE family. GatB subfamily. As to quaternary structure, heterotrimer of A, B and C subunits.

The catalysed reaction is L-glutamyl-tRNA(Gln) + L-glutamine + ATP + H2O = L-glutaminyl-tRNA(Gln) + L-glutamate + ADP + phosphate + H(+). It carries out the reaction L-aspartyl-tRNA(Asn) + L-glutamine + ATP + H2O = L-asparaginyl-tRNA(Asn) + L-glutamate + ADP + phosphate + 2 H(+). Its function is as follows. Allows the formation of correctly charged Asn-tRNA(Asn) or Gln-tRNA(Gln) through the transamidation of misacylated Asp-tRNA(Asn) or Glu-tRNA(Gln) in organisms which lack either or both of asparaginyl-tRNA or glutaminyl-tRNA synthetases. The reaction takes place in the presence of glutamine and ATP through an activated phospho-Asp-tRNA(Asn) or phospho-Glu-tRNA(Gln). The chain is Aspartyl/glutamyl-tRNA(Asn/Gln) amidotransferase subunit B from Campylobacter jejuni (strain RM1221).